A 142-amino-acid chain; its full sequence is Gonadotropin subunit beta-2 (142 aa).

The first 24 residues, 1–24 (MLGLHVGTLMISLFLCILLEPVEG), serve as a signal peptide directing secretion. 6 disulfide bridges follow: Cys-30/Cys-78, Cys-44/Cys-93, Cys-47/Cys-131, Cys-55/Cys-109, Cys-59/Cys-111, and Cys-114/Cys-121. N-linked (GlcNAc...) asparagine glycosylation occurs at Asn-34.

This sequence belongs to the glycoprotein hormones subunit beta family. Heterodimer of an alpha and a beta chain.

It is found in the secreted. Involved in gametogenesis and steroidogenesis. The sequence is that of Gonadotropin subunit beta-2 (cgbb) from Coregonus autumnalis (Arctic cisco).